Reading from the N-terminus, the 855-residue chain is Pre-mRNA-splicing factor SYF1 (855 aa).

9 HAT repeats span residues 15-47 (LVFEEEDLPYEEEIMRNQFSVKCWLRYIEFKQG), 48-80 (APKPRLNQLYERALKLLPCSYKLWYRYLKARRA), 90-122 (PAYEDVNNCHERAFVFMHKMPRLWLDYCQFLMD), 124-158 (GRVTHTRRTFDRALRALPITQHSRIWPLYLRFLRS), 160-192 (PLPETAVRGYRRFLKLSPESAEEYIEYLKSSDR), 198-230 (QRLATVVNDERFVSKAGKSNYQLWHELCDLISQ), 235-268 (VQSLNVDAIIRGGLTRFTDQLGKLWCSLADYYIR), 270-305 (GHFEKARDVYEEAIRTVMTVRDFTQVFDSYAQFEES), and 369-407 (GRPREIINTYTEAVQTVDPFKATGKPHTLWVAFAKFYED). Residue lysine 420 is modified to N6-acetyllysine. HAT repeat units lie at residues 498 to 530 (GTFQSTKAVYDRILDLRIATPQIVINYAMFLEE), 532 to 566 (KYFEESFKAYERGISLFKWPNVSDIWSTYLTKFIS), 571 to 605 (RKLERARDLFEQALDGCPPKYAKTLYLLYAQLEEE), 643 to 677 (YGVTHTRGIYQKAIEVLSDEHAREMCLRFADMECK), and 679 to 713 (GEIDRARAIYSFCSQICDPRTTGAFWQTWKDFEVR). The disordered stretch occupies residues 808 to 855 (AELAQQANPEEIQLGEDEDEDEMDLEPNEVRLEQQSVPAAVFGSLKED). The segment covering 820–834 (QLGEDEDEDEMDLEP) has biased composition (acidic residues). Serine 851 bears the Phosphoserine mark.

The protein belongs to the crooked-neck family. As to quaternary structure, associates with RNA polymerase II, the TCR-specific proteins CKN1/CSA and ERCC6/CSB, and XPA. Identified in the spliceosome C complex. Component of the XAB2 complex, a multimeric protein complex composed of XAB2, PRPF19, AQR, ZNF830, ISY1, and PPIE. Identified in a pentameric intron-binding (IB) complex composed of AQR, XAB2, ISY1, ZNF830 and PPIE that is incorporated into the spliceosome as a preassembled complex. The IB complex does not contain PRPF19.

Its subcellular location is the nucleus. Involved in pre-mRNA splicing as component of the spliceosome. Involved in transcription-coupled repair (TCR), transcription and pre-mRNA splicing. In Mus musculus (Mouse), this protein is Pre-mRNA-splicing factor SYF1 (Xab2).